A 138-amino-acid chain; its full sequence is Phospholipase A2 homolog mojave toxin acidic chain (138 aa).

A signal peptide spans 1-40 (MRALWIVAVLLVGVEGSLVEFETLIMKIAGRSGISYYSSY). Disulfide bonds link Cys-42-Cys-131, Cys-44-Cys-60, Cys-59-Cys-111, Cys-65-Cys-138, Cys-66-Cys-104, Cys-73-Cys-97, and Cys-91-Cys-102. A propeptide spanning residues 81-83 (TYR) is cleaved from the precursor. Gln-84 is modified (pyrrolidone carboxylic acid). A propeptide spanning residues 120-126 (DYKYLRF) is cleaved from the precursor.

This sequence belongs to the phospholipase A2 family. Group II subfamily. D49 sub-subfamily. Heterodimer of an acidic and a basic chain. The acidic subunit is non-toxic, without enzymatic activity and comprises 3 peptides that are cross-linked by 5 disulfide bridges. The basic subunit is toxic, has phospholipase A2 activity and is composed of a single chain. It depends on Ca(2+) as a cofactor. Expressed by the venom gland.

Its subcellular location is the secreted. Functionally, snake venom phospholipase A2 (PLA2) that inhibits neuromuscular transmission by blocking acetylcholine release from the nerve termini. The chain is Phospholipase A2 homolog mojave toxin acidic chain from Crotalus scutulatus scutulatus (Mojave rattlesnake).